The primary structure comprises 272 residues: Orotidine 5'-phosphate decarboxylase (272 aa).

Lys-95 acts as the Proton donor in catalysis.

The protein belongs to the OMP decarboxylase family. Type 2 subfamily.

The catalysed reaction is orotidine 5'-phosphate + H(+) = UMP + CO2. It participates in pyrimidine metabolism; UMP biosynthesis via de novo pathway; UMP from orotate: step 2/2. The chain is Orotidine 5'-phosphate decarboxylase from Cupriavidus taiwanensis (strain DSM 17343 / BCRC 17206 / CCUG 44338 / CIP 107171 / LMG 19424 / R1) (Ralstonia taiwanensis (strain LMG 19424)).